The following is a 1053-amino-acid chain: Serine/threonine-protein phosphatase 6 regulatory ankyrin repeat subunit A (1053 aa).

ANK repeat units lie at residues 40–69 (EKRTPLHAAAYLGDAEIIELLILSGARVNA), 73–102 (KWLTPLHRAVASCSEEAVQVLLKHSADVNA), 106–135 (NWQTPLHIAAANKAVKCAEALVPLLSNVNV), 139–168 (AGRTALHHAAFSGHGEMVKLLLSRGANINA), 172–201 (KDRRAIHWAAYMGHIEVVKLLVSHGAEVTC), 205–234 (KSYTPLHAAASSGMISVVKYLLDLGVDMNE), 238–267 (YGNTPLHVACYNGQDVVVNELIDCGAIVNQ), 271–301 (KGFTPLHFAAASTHGALCLELLVGNGADVNM), 305–334 (DGKTPLHMTALHGRFSRSQTIIQSGAVIDC), 338–367 (NGNTPLHIAARYGHELLINTLITSGADTAK), 371–400 (HGMFPLHLAALSGFSDCCRKLLSSGFDIDT), 404–433 (FGRTCLHAAAAGGNLECLNLLLNTGADFNK), 437–466 (FGRSPLHYAAANCNYQCLFALVGSGASVND), 470–500 (RGCTPLHYAATSDTDGKCLEYLLRNDANPGI), 504–534 (QGYNAVHYSAAYGHRLCLQLIASETPLDVLM), 549–578 (ATISPLHLAAYHGHHQALEVLVQSLLDLDV), 582–611 (SGRTPLDLAAFKGHVECVDVLINQGASILV), 616–645 (LKRTPIHAAATNGHSECLRLLIGNAEPQNA), 652–681 (NGQTPLMLSVLNGHTDCVYSLLNKGANVDA), 685–714 (WGRTALHRGAVTGHEECVDALLQHGAKCLL), 718–747 (RGRTPIHLSAACGHIGVLGALLQSAASMDA), 755–784 (HGYTALHWACYNGHETCVELLLEQEVFQKT), 787–817 (NAFSPLHCAVINDNEGAAEMLIDTLGASIVN), 822–851 (KGRTPLHAAAFTDHVECLQLLLSHNAQVNS), 855–885 (TGKTPLMMAAENGQTNTVEMLVSSASAELTL), 889–918 (SKNTALHLACSKGHETSALLILEKITDRNL), and 925–954 (ALQTPLHVAARNGLTMVVQELLGKGASVLA). A phosphoserine mark is found at Ser-1007 and Ser-1011.

As to quaternary structure, protein phosphatase 6 (PP6) holoenzyme is proposed to be a heterotrimeric complex formed by the catalytic subunit, a SAPS domain-containing subunit (PP6R) and an ankyrin repeat-domain containing regulatory subunit (ARS). Interacts with PPP6C, PPP6R1 and PPP6R3. Interacts with PPP1C and HNRPK. Ubiquitinated by the ECS(RAB40C) complex leading to its degradation and decreased PP6 activity.

The protein resides in the nucleus. It is found in the nucleoplasm. The protein localises to the cytoplasm. Its subcellular location is the cytosol. It localises to the cell projection. The protein resides in the lamellipodium. Regulatory subunit of protein phosphatase 6 (PP6) that may be involved in the recognition of phosphoprotein substrates. Involved in the PP6-mediated dephosphorylation of NFKBIE opposing its degradation in response to TNF-alpha. Selectively inhibits the phosphatase activity of PPP1C. Targets PPP1C to modulate HNRPK phosphorylation. Involved in the PP6-mediated dephosphorylation of MOB1 and induced focal adhesion assembly during cell migration. The sequence is that of Serine/threonine-protein phosphatase 6 regulatory ankyrin repeat subunit A from Homo sapiens (Human).